Reading from the N-terminus, the 398-residue chain is uncharacterized protein (398 aa).

The first 22 residues, 1 to 22 (MKLKFYKLPLITTAFSFVFLTA), serve as a signal peptide directing secretion. The N-palmitoyl cysteine moiety is linked to residue Cys-23. The S-diacylglycerol cysteine moiety is linked to residue Cys-23.

The protein localises to the cell membrane. This is an uncharacterized protein from Mycoplasma genitalium (strain ATCC 33530 / DSM 19775 / NCTC 10195 / G37) (Mycoplasmoides genitalium).